The chain runs to 177 residues: Large ribosomal subunit protein uL6 (177 aa).

The protein belongs to the universal ribosomal protein uL6 family. In terms of assembly, part of the 50S ribosomal subunit.

Its function is as follows. This protein binds to the 23S rRNA, and is important in its secondary structure. It is located near the subunit interface in the base of the L7/L12 stalk, and near the tRNA binding site of the peptidyltransferase center. The sequence is that of Large ribosomal subunit protein uL6 from Dinoroseobacter shibae (strain DSM 16493 / NCIMB 14021 / DFL 12).